A 372-amino-acid chain; its full sequence is Solute carrier family 35 member F6 (372 aa).

The first 18 residues, 1–18 (MAWTKYQLFLAGLMLVTG), serve as a signal peptide directing secretion. Helical transmembrane passes span 48–68 (FVQA…FYLL) and 89–109 (LLFL…YVAL). Residues 105 to 160 (MYVALNMTSASSFQMLRGAVIIFTGLFSVAFLDRRLVPSQWLGILITIAGLVVVGL) enclose the EamA domain. N-linked (GlcNAc...) asparagine glycosylation is present at asparagine 110. 7 helical membrane-spanning segments follow: residues 116 to 136 (SFQM…VAFL), 145 to 165 (WLGI…DLLS), 176 to 196 (VITG…QMVL), 211 to 231 (AVGI…VPMY), 261 to 281 (LIAL…FSGI), 293 to 312 (MVLD…ALGW), and 320 to 336 (ILGF…YNGL). Threonine 366 bears the Phosphothreonine mark.

The protein belongs to the SLC35F solute transporter family. As to quaternary structure, interacts with SLC25A5.

It localises to the mitochondrion. The protein localises to the lysosome membrane. Involved in the maintenance of mitochondrial membrane potential in pancreatic ductal adenocarcinoma (PDAC) cells. Promotes pancreatic ductal adenocarcinoma (PDAC) cell growth. May play a role as a nucleotide-sugar transporter. The sequence is that of Solute carrier family 35 member F6 (Slc35f6) from Rattus norvegicus (Rat).